The following is a 98-amino-acid chain: MSRACELTGKAVMSGNNVSHANNKTRRRFLPNLCDVTLMSEALGQSYRLRVSANALRSVEHRGGLDAFLLKAKSNELSQRARLLKKQVAKKLTEQTEA.

Belongs to the bacterial ribosomal protein bL28 family.

The protein is Large ribosomal subunit protein bL28 of Chelativorans sp. (strain BNC1).